Consider the following 433-residue polypeptide: tRNA (guanine(10)-N(2))-methyltransferase (433 aa).

This sequence belongs to the class I-like SAM-binding methyltransferase superfamily. TRM11 methyltransferase family. As to quaternary structure, interacts with TRM112.

The protein localises to the cytoplasm. The catalysed reaction is guanosine(10) in tRNA + S-adenosyl-L-methionine = N(2)-methylguanosine(10) in tRNA + S-adenosyl-L-homocysteine + H(+). In terms of biological role, catalytic subunit of an S-adenosyl-L-methionine-dependent tRNA methyltransferase complex that mediates the methylation of the guanosine nucleotide at position 10 (m2G10) in tRNAs. The sequence is that of tRNA (guanine(10)-N(2))-methyltransferase (TRM11) from Saccharomyces cerevisiae (strain ATCC 204508 / S288c) (Baker's yeast).